The following is a 297-amino-acid chain: Trans-enoyl reductase TOXD (297 aa).

Residues 162–165 (STAT) and tyrosine 203 contribute to the NADP(+) site.

It belongs to the zinc-containing alcohol dehydrogenase family. In terms of assembly, monomer.

In terms of biological role, trans-enoyl reductase; part of the diffuse TOX2 gene cluster that mediates the biosynthesis of the HC-toxin, cyclic tetrapeptide of structure cyclo(D-Pro-L-Ala-D-Ala-L-Aeo), where Aeo stands for 2-amino-9,10-epoxi-8-oxodecanoic acid. HC-toxin is a determinant of specificity and virulence in the interaction between the producing fungus and its host, maize. TOXD does not seem to play a role in HC-toxin biosynthesis. This Cochliobolus carbonum (Maize leaf spot fungus) protein is Trans-enoyl reductase TOXD.